The chain runs to 1149 residues: Protogenin A (1149 aa).

Residues 1 to 23 (MASFKRDLYLFLAVFLSISGVWS) form the signal peptide. At 24–932 (FSELFFIKEP…GFYHLDQRSM (909 aa)) the chain is on the extracellular side. 4 consecutive Ig-like domains span residues 27-117 (LFFI…ARLT), 122-209 (STFT…ATLT), 222-309 (PRII…ANIT), and 314-399 (PSLV…RLIV). Intrachain disulfides connect C48/C100 and C143/C192. N78 carries an N-linked (GlcNAc...) asparagine glycan. Residue N230 is glycosylated (N-linked (GlcNAc...) asparagine). C243 and C291 are joined by a disulfide. N-linked (GlcNAc...) asparagine glycans are attached at residues N300 and N307. The cysteines at positions 335 and 382 are disulfide-linked. 5 consecutive Fibronectin type-III domains span residues 408–502 (APRN…TLED), 504–600 (PLRA…TPKA), 605–704 (VPLA…VRDR), 711–804 (PPHH…TLPE), and 809–905 (APVG…IHTD). Residues N460 and N475 are each glycosylated (N-linked (GlcNAc...) asparagine). N-linked (GlcNAc...) asparagine glycosylation occurs at N617. Residues 646–666 (GQSEAAQAQIPPHHRQHTIGG) form a disordered region. Residues N720, N741, and N753 are each glycosylated (N-linked (GlcNAc...) asparagine). Residues 933 to 953 (AGIAVGVCIALTCIIICILIL) traverse the membrane as a helical segment. Residues 954 to 1149 (ACRSKTRKSC…EQEMTDLHPV (196 aa)) are Cytoplasmic-facing. Residues 1060–1149 (YTETSPENPP…EQEMTDLHPV (90 aa)) form a disordered region. The span at 1061-1073 (TETSPENPPTTLQ) shows a compositional bias: polar residues. A compositionally biased stretch (basic and acidic residues) spans 1084–1106 (EGSHSSEGSHETSDSGRYSHDDT).

The protein belongs to the immunoglobulin superfamily. DCC family. In terms of tissue distribution, expression begins in the posterior region of the embryo and this posterior restriction persists at the 4 s stage. At early somite stages, expressed along the neural tube with lower levels in the lateral and paraxial mesoderm. Expression decreases caudally and rostrally becomes restricted to the ventral part of the brain. Widespread in the spinal cord at 30 hours post-fertilization (hpf) and is also expressed in the lens from this time. At 40 hpf, expression is restricted to the lens.

The protein resides in the membrane. In terms of biological role, may play a role in anteroposterior axis elongation. This chain is Protogenin A, found in Danio rerio (Zebrafish).